The following is a 206-amino-acid chain: Translation initiation factor IF-3 (206 aa).

Belongs to the IF-3 family. In terms of assembly, monomer.

It is found in the cytoplasm. IF-3 binds to the 30S ribosomal subunit and shifts the equilibrium between 70S ribosomes and their 50S and 30S subunits in favor of the free subunits, thus enhancing the availability of 30S subunits on which protein synthesis initiation begins. The protein is Translation initiation factor IF-3 of Chlorobium luteolum (strain DSM 273 / BCRC 81028 / 2530) (Pelodictyon luteolum).